The chain runs to 422 residues: F-box/FBD/LRR-repeat protein At5g56420 (422 aa).

An F-box domain is found at 5 to 54; it reads RDRLSQLPDDFLLQILSWLPTKDVLVTSLLSKRWRFLWTLVPRLNYDLRL. LRR repeat units lie at residues 59-85, 136-163, 164-189, 193-212, 214-238, 279-304, and 305-330; these read CPRF…NIKI, VLKL…HLLD, VKYL…VVQR, DNVK…SLHK, SQAF…DIED, LCLI…ELCT, and CAPR…KLRQ. One can recognise an FBD domain in the interval 342–391; the sequence is SWKQPALPKCLLFHLETFKWELYEGSQKQKEVATFILKHAIRLKTAIISP.

The protein is F-box/FBD/LRR-repeat protein At5g56420 of Arabidopsis thaliana (Mouse-ear cress).